A 254-amino-acid polypeptide reads, in one-letter code: Fructose-1,6-bisphosphatase (254 aa).

Mg(2+) contacts are provided by Glu-68, Asp-84, Leu-86, and Asp-87. Substrate is bound by residues 87-89 (DGS), Arg-171, Ile-176, and Arg-195. Residue Asp-202 coordinates Mg(2+).

Belongs to the inositol monophosphatase superfamily. FBPase class 4 family. In terms of assembly, homodimer. It depends on Mg(2+) as a cofactor.

The enzyme catalyses beta-D-fructose 1,6-bisphosphate + H2O = beta-D-fructose 6-phosphate + phosphate. With respect to regulation, inhibited by Li(+), ADP, ATP and glucose-6-phosphate. Its function is as follows. Catalyzes the conversion of D-fructose 1,6-bisphosphate to D-fructose 6-phosphate. In vitro, also has weak activity with inositol-1-phosphate, glucose-1-phosphate and glycerol-2-phosphate. This is Fructose-1,6-bisphosphatase from Pyrococcus furiosus (strain ATCC 43587 / DSM 3638 / JCM 8422 / Vc1).